The chain runs to 894 residues: Phosphoenolpyruvate carboxylase (894 aa).

Residues histidine 143 and lysine 556 contribute to the active site.

This sequence belongs to the PEPCase type 1 family. Mg(2+) is required as a cofactor.

It carries out the reaction oxaloacetate + phosphate = phosphoenolpyruvate + hydrogencarbonate. Functionally, forms oxaloacetate, a four-carbon dicarboxylic acid source for the tricarboxylic acid cycle. The protein is Phosphoenolpyruvate carboxylase of Acinetobacter baumannii (strain ATCC 17978 / DSM 105126 / CIP 53.77 / LMG 1025 / NCDC KC755 / 5377).